We begin with the raw amino-acid sequence, 132 residues long: Small ribosomal subunit protein uS8 (132 aa).

It belongs to the universal ribosomal protein uS8 family. Part of the 30S ribosomal subunit. Contacts proteins S5 and S12.

In terms of biological role, one of the primary rRNA binding proteins, it binds directly to 16S rRNA central domain where it helps coordinate assembly of the platform of the 30S subunit. The chain is Small ribosomal subunit protein uS8 from Leifsonia xyli subsp. xyli (strain CTCB07).